The sequence spans 355 residues: 3-isopropylmalate dehydrogenase (355 aa).

Substrate is bound by residues Arg-90, Arg-100, Arg-128, and Asp-222. Mg(2+) is bound by residues Asp-222, Asp-246, and Asp-250. 280–292 (GSAPDIAGKGVAN) serves as a coordination point for NAD(+).

It belongs to the isocitrate and isopropylmalate dehydrogenases family. LeuB type 1 subfamily. As to quaternary structure, homodimer. Requires Mg(2+) as cofactor. Mn(2+) is required as a cofactor.

The protein resides in the cytoplasm. It catalyses the reaction (2R,3S)-3-isopropylmalate + NAD(+) = 4-methyl-2-oxopentanoate + CO2 + NADH. Its pathway is amino-acid biosynthesis; L-leucine biosynthesis; L-leucine from 3-methyl-2-oxobutanoate: step 3/4. Functionally, catalyzes the oxidation of 3-carboxy-2-hydroxy-4-methylpentanoate (3-isopropylmalate) to 3-carboxy-4-methyl-2-oxopentanoate. The product decarboxylates to 4-methyl-2 oxopentanoate. The sequence is that of 3-isopropylmalate dehydrogenase from Cupriavidus pinatubonensis (strain JMP 134 / LMG 1197) (Cupriavidus necator (strain JMP 134)).